The sequence spans 102 residues: UPF0213 protein in potE 3'region (102 aa).

One can recognise a GIY-YIG domain in the interval 6 to 81; it reads SPWHLYMLRL…KQLSKTQKER (76 aa).

This sequence belongs to the UPF0213 family.

In Serratia liquefaciens, this protein is UPF0213 protein in potE 3'region.